The primary structure comprises 197 residues: Probable GTP-binding protein EngB (197 aa).

In terms of domain architecture, EngB-type G spans 25-197 (SAPEIAFAGR…VRDEFFKFTR (173 aa)). GTP-binding positions include 33 to 40 (GRSNVGKS), 60 to 64 (GCTRQ), 79 to 82 (DLPG), 146 to 149 (TKID), and 177 to 179 (MSI). 2 residues coordinate Mg(2+): Ser40 and Thr62.

It belongs to the TRAFAC class TrmE-Era-EngA-EngB-Septin-like GTPase superfamily. EngB GTPase family. The cofactor is Mg(2+).

Necessary for normal cell division and for the maintenance of normal septation. The protein is Probable GTP-binding protein EngB of Wolbachia sp. subsp. Drosophila simulans (strain wRi).